A 421-amino-acid polypeptide reads, in one-letter code: Acetate kinase (421 aa).

A Mg(2+)-binding site is contributed by asparagine 7. Residue lysine 14 coordinates ATP. Arginine 91 contributes to the substrate binding site. Aspartate 148 serves as the catalytic Proton donor/acceptor. ATP is bound by residues 208–212 (HIGNG) and 283–285 (DRR). Glutamate 387 is a Mg(2+) binding site.

The protein belongs to the acetokinase family. In terms of assembly, homodimer. It depends on Mg(2+) as a cofactor. Mn(2+) serves as cofactor.

Its subcellular location is the cytoplasm. The catalysed reaction is acetate + ATP = acetyl phosphate + ADP. It participates in metabolic intermediate biosynthesis; acetyl-CoA biosynthesis; acetyl-CoA from acetate: step 1/2. Catalyzes the formation of acetyl phosphate from acetate and ATP. Can also catalyze the reverse reaction. The protein is Acetate kinase of Geobacter sulfurreducens (strain ATCC 51573 / DSM 12127 / PCA).